A 631-amino-acid polypeptide reads, in one-letter code: Phosphomethylpyrimidine synthase (631 aa).

Substrate-binding positions include Asn-239, Met-268, Tyr-297, His-333, 353–355, 394–397, and Glu-433; these read SRG and DGLR. His-437 lines the Zn(2+) pocket. Residue Tyr-460 coordinates substrate. His-501 provides a ligand contact to Zn(2+). [4Fe-4S] cluster contacts are provided by Cys-581, Cys-584, and Cys-589.

This sequence belongs to the ThiC family. In terms of assembly, homodimer. It depends on [4Fe-4S] cluster as a cofactor.

The enzyme catalyses 5-amino-1-(5-phospho-beta-D-ribosyl)imidazole + S-adenosyl-L-methionine = 4-amino-2-methyl-5-(phosphooxymethyl)pyrimidine + CO + 5'-deoxyadenosine + formate + L-methionine + 3 H(+). It functions in the pathway cofactor biosynthesis; thiamine diphosphate biosynthesis. Its function is as follows. Catalyzes the synthesis of the hydroxymethylpyrimidine phosphate (HMP-P) moiety of thiamine from aminoimidazole ribotide (AIR) in a radical S-adenosyl-L-methionine (SAM)-dependent reaction. The chain is Phosphomethylpyrimidine synthase from Escherichia coli (strain 55989 / EAEC).